Consider the following 600-residue polypeptide: Netrin-1 (600 aa).

Residues 1 to 24 (MMRAMWEALAALAAVSCLVGAVRG) form the signal peptide. The Laminin N-terminal domain maps to 47–284 (HPRRCIPDFV…AVSDLQVGGR (238 aa)). Residues Asn95, Asn116, and Asn131 are each glycosylated (N-linked (GlcNAc...) asparagine). Intrachain disulfides connect Cys119-Cys152, Cys285-Cys294, Cys287-Cys304, Cys306-Cys315, Cys318-Cys338, Cys341-Cys350, Cys343-Cys368, Cys371-Cys380, Cys383-Cys401, Cys404-Cys416, Cys406-Cys423, Cys425-Cys434, Cys437-Cys451, and Cys472-Cys544. 3 Laminin EGF-like domains span residues 285 to 340 (CKCN…ECVA), 341 to 403 (CNCN…ACKA), and 404 to 453 (CDCH…PCIK). Asn417 is a glycosylation site (N-linked (GlcNAc...) asparagine). Residues 472 to 600 (CDSYCKASKG…KFQQREKKEL (129 aa)) enclose the NTR domain. Positions 530–532 (RGD) match the Cell attachment site motif.

Binds to its receptors; DCC, UNC5A, UNC5B, UNC5C and probably UNC5D. Binds to its receptor; DSCAM. Interacts with APP.

It localises to the secreted. Its subcellular location is the cytoplasm. In terms of biological role, netrins control guidance of CNS commissural axons and peripheral motor axons. Its association with either DCC or some UNC5 receptors will lead to axon attraction or repulsion, respectively. Binding to UNC5C might cause dissociation of UNC5C from polymerized TUBB3 in microtubules and thereby lead to increased microtubule dynamics and axon repulsion. Involved in dorsal root ganglion axon projection towards the spinal cord. It also serves as a survival factor via its association with its receptors which prevent the initiation of apoptosis. Involved in colorectal tumorigenesis by regulating apoptosis. The protein is Netrin-1 (NTN1) of Sus scrofa (Pig).